The primary structure comprises 220 residues: GTP cyclohydrolase 1 (220 aa).

Zn(2+)-binding residues include Cys109, His112, and Cys180.

This sequence belongs to the GTP cyclohydrolase I family. As to quaternary structure, homomer.

It carries out the reaction GTP + H2O = 7,8-dihydroneopterin 3'-triphosphate + formate + H(+). Its pathway is cofactor biosynthesis; 7,8-dihydroneopterin triphosphate biosynthesis; 7,8-dihydroneopterin triphosphate from GTP: step 1/1. The sequence is that of GTP cyclohydrolase 1 from Edwardsiella ictaluri (strain 93-146).